Reading from the N-terminus, the 431-residue chain is Galactose-3-O-sulfotransferase 3 (431 aa).

Over 1-19 the chain is Cytoplasmic; it reads MPPILQRLQQSTKMMSHRK. The chain crosses the membrane as a helical; Signal-anchor for type II membrane protein span at residues 20 to 40; it reads ILLLVLGCSTVSLLIHQGSQL. At 41-431 the chain is on the lumenal side; the sequence is SWYPKLFPLS…RALPRIPQGT (391 aa). N-linked (GlcNAc...) asparagine glycosylation is found at N91, N110, N177, and N302. Residues 400-431 form a disordered region; the sequence is KRRGGVRSRPESVLDNPPPRPIRALPRIPQGT. A compositionally biased stretch (low complexity) spans 421–431; it reads IRALPRIPQGT.

Belongs to the galactose-3-O-sulfotransferase family. It depends on Mg(2+) as a cofactor.

It localises to the golgi apparatus. The protein resides in the golgi stack membrane. The protein operates within protein modification; carbohydrate sulfation. Functionally, transfers a sulfate to position 3 of non-reducing beta-galactosyl residues in N-glycans and core2-branched O-glycans. Has high activity towards Gal-beta-1,4-GlcNAc, Gal-beta-1,4(Fuc-alpha-1,3)GlcNAc and lower activity towards Gal-beta-1,3(Fuc-alpha-1,4)GlcNAc. The protein is Galactose-3-O-sulfotransferase 3 (Gal3st3) of Mus musculus (Mouse).